Here is a 231-residue protein sequence, read N- to C-terminus: MKINQVVLIRHGQSEWNTLNKFTGWHDAELDKKGKDEAKFAAILLKKEKFFFDCAHTSLLKRAIHTLQYILDELNQTWLSVKKSWRLNERHYGALEGLNKDEVIEKYGQKQVLLWRRSFDISPPQINIKDKRFPGNDPRYSHLNIHDIPLGESLEKTAKRVIPYWNKIVYPELKNNKKILIVAHGNSLRALIQHLYKIDNKAILDLNIPTAQPIILDFDNEKNPIKWHYLT.

Residues 10-17 (RHGQSEWN), 23-24 (TG), R62, 89-92 (ERHY), K100, 116-117 (RR), and 185-186 (GN) contribute to the substrate site. H11 serves as the catalytic Tele-phosphohistidine intermediate. E89 serves as the catalytic Proton donor/acceptor.

The protein belongs to the phosphoglycerate mutase family. BPG-dependent PGAM subfamily. As to quaternary structure, homodimer.

The catalysed reaction is (2R)-2-phosphoglycerate = (2R)-3-phosphoglycerate. It functions in the pathway carbohydrate degradation; glycolysis; pyruvate from D-glyceraldehyde 3-phosphate: step 3/5. Catalyzes the interconversion of 2-phosphoglycerate and 3-phosphoglycerate. This chain is 2,3-bisphosphoglycerate-dependent phosphoglycerate mutase, found in Buchnera aphidicola subsp. Acyrthosiphon pisum (strain APS) (Acyrthosiphon pisum symbiotic bacterium).